The following is a 259-amino-acid chain: MAYVTMKQMLETGVHFGHQTRRWNPKMRPYIFGARNGIHIMDLQQTVKLFRKAHDFIADNVAKGGKVLFIGTKRQAQEAIAAEASRAGMFHVTHRWMGGTLTNFQTIKKSIDRLKKLEEMFEDGSIKRFPKKEIVMMGREVKKLNLALGGIKDLNGAPAVAFVIDPKREQIAIQECRKLGIPVVAVVDSNCDPDMVDYIIPGNDDAIRAIKLFASHMADACLEGAARRKEDKAMEAEETKAAEKAVETEAKEETPQEAK.

The disordered stretch occupies residues 232–259 (KAMEAEETKAAEKAVETEAKEETPQEAK).

This sequence belongs to the universal ribosomal protein uS2 family.

This is Small ribosomal subunit protein uS2 from Maridesulfovibrio salexigens (strain ATCC 14822 / DSM 2638 / NCIMB 8403 / VKM B-1763) (Desulfovibrio salexigens).